The following is a 186-amino-acid chain: Ribosome-recycling factor (186 aa).

Belongs to the RRF family.

The protein localises to the cytoplasm. In terms of biological role, responsible for the release of ribosomes from messenger RNA at the termination of protein biosynthesis. May increase the efficiency of translation by recycling ribosomes from one round of translation to another. This Rickettsia africae (strain ESF-5) protein is Ribosome-recycling factor.